The primary structure comprises 73 residues: Large ribosomal subunit protein bL31c (73 aa).

The protein belongs to the bacterial ribosomal protein bL31 family. Type A subfamily. In terms of assembly, part of the 50S ribosomal subunit.

It is found in the plastid. The protein localises to the chloroplast. Functionally, binds the 23S rRNA. The chain is Large ribosomal subunit protein bL31c from Palmaria palmata (Dulse).